A 103-amino-acid chain; its full sequence is Small ribosomal subunit protein uS10 (103 aa).

It belongs to the universal ribosomal protein uS10 family. In terms of assembly, part of the 30S ribosomal subunit.

Functionally, involved in the binding of tRNA to the ribosomes. The polypeptide is Small ribosomal subunit protein uS10 (Chlorobium limicola (strain DSM 245 / NBRC 103803 / 6330)).